The chain runs to 385 residues: L-arabinitol 4-dehydrogenase (385 aa).

Positions 54, 79, 80, 109, 112, 115, 123, and 164 each coordinate Zn(2+). Residues 191–192 (PI), aspartate 212, arginine 217, isoleucine 292, and 316–318 (QYR) contribute to the NAD(+) site.

The protein belongs to the zinc-containing alcohol dehydrogenase family. In terms of assembly, homotetramer. Requires Zn(2+) as cofactor.

It carries out the reaction L-arabinitol + NAD(+) = L-xylulose + NADH + H(+). The protein operates within carbohydrate degradation; L-arabinose degradation via L-arabinitol; D-xylulose 5-phosphate from L-arabinose (fungal route): step 2/5. In terms of biological role, catalyzes the NAD-dependent oxidation of L-arabinitol to L-xylulose in the fungal L-arabinose catabolic pathway. L-arabinose catabolism is important for using plant material as a carbon source. NADP cannot act as a cosubstrate. The sequence is that of L-arabinitol 4-dehydrogenase (lad1) from Penicillium rubens (strain ATCC 28089 / DSM 1075 / NRRL 1951 / Wisconsin 54-1255) (Penicillium chrysogenum).